Reading from the N-terminus, the 277-residue chain is Caspase-3 (277 aa).

Met-1 carries the N-acetylmethionine modification. 2 consecutive propeptides follow at residues 1-9 (MENTENSVD) and 10-28 (SKSI…ESMD). Lys-11 carries the N6-acetyllysine modification. Ser-26 bears the Phosphoserine mark. Residues His-121 and Cys-163 contribute to the active site. Cys-163 carries the S-nitrosocysteine; in inhibited form modification. At Arg-207 the chain carries (Microbial infection) ADP-riboxanated arginine.

This sequence belongs to the peptidase C14A family. In terms of assembly, heterotetramer that consists of two anti-parallel arranged heterodimers, each one formed by a 17 kDa (p17) and a 12 kDa (p12) subunit. Interacts with BIRC6/bruce. Cleavage by granzyme B, caspase-6, caspase-8 and caspase-10 generates the two active subunits. Additional processing of the propeptides is likely due to the autocatalytic activity of the activated protease. Active heterodimers between the small subunit of caspase-7 protease and the large subunit of caspase-3 also occur and vice versa. In terms of processing, S-nitrosylated on its catalytic site cysteine in unstimulated human cell lines and denitrosylated upon activation of the Fas apoptotic pathway, associated with an increase in intracellular caspase activity. Fas therefore activates caspase-3 not only by inducing the cleavage of the caspase zymogen to its active subunits, but also by stimulating the denitrosylation of its active site thiol. Post-translationally, ubiquitinated by BIRC6; this activity is inhibited by DIABLO/SMAC. (Microbial infection) ADP-riboxanation by C.violaceum CopC blocks CASP3 processing, preventing CASP3 activation and ability to recognize and cleave substrates. Highly expressed in lung, spleen, heart, liver and kidney. Moderate levels in brain and skeletal muscle, and low in testis. Also found in many cell lines, highest expression in cells of the immune system.

It is found in the cytoplasm. It catalyses the reaction Strict requirement for an Asp residue at positions P1 and P4. It has a preferred cleavage sequence of Asp-Xaa-Xaa-Asp-|- with a hydrophobic amino-acid residue at P2 and a hydrophilic amino-acid residue at P3, although Val or Ala are also accepted at this position.. Its activity is regulated as follows. Inhibited by isatin sulfonamides. Inhibited by BIRC6; following inhibition of BIRC6-caspase binding by DIABLO/SMAC, BIRC6 is subjected to caspase cleavage, leading to an increase in active caspases. In terms of biological role, thiol protease that acts as a major effector caspase involved in the execution phase of apoptosis. Following cleavage and activation by initiator caspases (CASP8, CASP9 and/or CASP10), mediates execution of apoptosis by catalyzing cleavage of many proteins. At the onset of apoptosis, it proteolytically cleaves poly(ADP-ribose) polymerase PARP1 at a '216-Asp-|-Gly-217' bond. Cleaves and activates sterol regulatory element binding proteins (SREBPs) between the basic helix-loop-helix leucine zipper domain and the membrane attachment domain. Cleaves and activates caspase-6, -7 and -9 (CASP6, CASP7 and CASP9, respectively). Cleaves and inactivates interleukin-18 (IL18). Involved in the cleavage of huntingtin. Triggers cell adhesion in sympathetic neurons through RET cleavage. Cleaves and inhibits serine/threonine-protein kinase AKT1 in response to oxidative stress. Acts as an inhibitor of type I interferon production during virus-induced apoptosis by mediating cleavage of antiviral proteins CGAS, IRF3 and MAVS, thereby preventing cytokine overproduction. Also involved in pyroptosis by mediating cleavage and activation of gasdermin-E (GSDME). Cleaves XRCC4 and phospholipid scramblase proteins XKR4, XKR8 and XKR9, leading to promote phosphatidylserine exposure on apoptotic cell surface. Cleaves BIRC6 following inhibition of BIRC6-caspase binding by DIABLO/SMAC. This is Caspase-3 (CASP3) from Homo sapiens (Human).